We begin with the raw amino-acid sequence, 122 residues long: Ribosome-binding factor A (122 aa).

Residues 95 to 111 (PTVERVTRIQRTLREVS) show a composition bias toward basic and acidic residues. The tract at residues 95-122 (PTVERVTRIQRTLREVSGEDGDGNGTQE) is disordered.

The protein belongs to the RbfA family. As to quaternary structure, monomer. Binds 30S ribosomal subunits, but not 50S ribosomal subunits or 70S ribosomes.

The protein localises to the cytoplasm. One of several proteins that assist in the late maturation steps of the functional core of the 30S ribosomal subunit. Associates with free 30S ribosomal subunits (but not with 30S subunits that are part of 70S ribosomes or polysomes). Required for efficient processing of 16S rRNA. May interact with the 5'-terminal helix region of 16S rRNA. The protein is Ribosome-binding factor A of Rubrobacter xylanophilus (strain DSM 9941 / JCM 11954 / NBRC 16129 / PRD-1).